Consider the following 626-residue polypeptide: Ankyrin repeat domain-containing protein 13B (626 aa).

An N-acetylmethionine modification is found at Met1. 2 ANK repeats span residues 47–76 (RGRTPLHLATTLGHLECARVLLAHGADVGR) and 80–109 (SGWTVLQEAVSTRDLELVQLVLRYRDYQRV). Residues 442 to 474 (PVPSVRGSPSSETPSPGSDSSSVSSSSSTTSCR) are disordered. Positions 449 to 472 (SPSSETPSPGSDSSSVSSSSSTTS) are enriched in low complexity. In terms of domain architecture, UIM 1 spans 503–522 (DDDDLLQFAIQQSLLEAGSE). Disordered regions lie at residues 534–590 (NSKP…DEQL) and 595–614 (ELSAQEQEERRRRARQEEEE). Residues 554–573 (PPTPQRQPAPPASVPSPRPS) are compositionally biased toward pro residues. UIM domains follow at residues 585–604 (SYDEQLRLAMELSAQEQEER) and 610–626 (QEEEELERILRLSLTEQ).

As to quaternary structure, interacts with EGFR (ubiquitinated); the interaction is direct and may regulate EGFR internalization.

Its subcellular location is the cell membrane. It is found in the late endosome. The protein localises to the early endosome. Ubiquitin-binding protein that specifically recognizes and binds 'Lys-63'-linked ubiquitin. Does not bind 'Lys-48'-linked ubiquitin. Positively regulates the internalization of ligand-activated EGFR by binding to the Ub moiety of ubiquitinated EGFR at the cell membrane. This Homo sapiens (Human) protein is Ankyrin repeat domain-containing protein 13B (ANKRD13B).